Reading from the N-terminus, the 275-residue chain is Large ribosomal subunit protein uL2 (275 aa).

The interval 227–261 is disordered; it reads PVDHPHGGGEAKSGQGNPHPVTPWGVPTKGYKTRK.

The protein belongs to the universal ribosomal protein uL2 family. Part of the 50S ribosomal subunit. Forms a bridge to the 30S subunit in the 70S ribosome.

In terms of biological role, one of the primary rRNA binding proteins. Required for association of the 30S and 50S subunits to form the 70S ribosome, for tRNA binding and peptide bond formation. It has been suggested to have peptidyltransferase activity; this is somewhat controversial. Makes several contacts with the 16S rRNA in the 70S ribosome. This Xylella fastidiosa (strain M23) protein is Large ribosomal subunit protein uL2.